A 309-amino-acid chain; its full sequence is Glutaminase (309 aa).

S64, N114, E160, N167, Y191, Y243, and V261 together coordinate substrate.

Belongs to the glutaminase family. Homotetramer.

It carries out the reaction L-glutamine + H2O = L-glutamate + NH4(+). The sequence is that of Glutaminase from Methylorubrum extorquens (strain CM4 / NCIMB 13688) (Methylobacterium extorquens).